A 551-amino-acid polypeptide reads, in one-letter code: Probable NADH-ubiquinone oxidoreductase C947.15c, mitochondrial (551 aa).

A mitochondrion-targeting transit peptide spans 1–35; it reads MSVSKARLQSVVRLSRTVPYSKTMVRSFHVSCAVK. 92-122 contributes to the FAD binding site; that stretch reads NIVVLGSGWGAVAAIKNLDPSLYNITLVSPR. Residue 255–291 participates in NAD(+) binding; the sequence is LHITVVGGGPTGMEFAAEMQDFIDNDVKDMFPELQKD.

Belongs to the NADH dehydrogenase family.

The protein localises to the mitochondrion. The catalysed reaction is a quinone + NADH + H(+) = a quinol + NAD(+). The enzyme catalyses a ubiquinone + NADH + H(+) = a ubiquinol + NAD(+). In terms of biological role, catalyzes the oxidation of NADH. In Schizosaccharomyces pombe (strain 972 / ATCC 24843) (Fission yeast), this protein is Probable NADH-ubiquinone oxidoreductase C947.15c, mitochondrial.